A 300-amino-acid chain; its full sequence is Acetaldehyde dehydrogenase 1 (300 aa).

NAD(+) is bound at residue 11 to 14 (SGNI). Cys126 (acyl-thioester intermediate) is an active-site residue. Residues 157–165 (SAGPGTRAN) and Asn276 each bind NAD(+).

It belongs to the acetaldehyde dehydrogenase family.

The enzyme catalyses acetaldehyde + NAD(+) + CoA = acetyl-CoA + NADH + H(+). The chain is Acetaldehyde dehydrogenase 1 from Rhodococcus erythropolis (strain PR4 / NBRC 100887).